We begin with the raw amino-acid sequence, 228 residues long: Cytochrome c oxidase subunit 2 (228 aa).

The Mitochondrial intermembrane portion of the chain corresponds to 1–26 (MATWANLGLQDSSSPLMEQLNFFHDH). The chain crosses the membrane as a helical span at residues 27–48 (TLLILTMITILVGYIMGMLSFN). The Mitochondrial matrix portion of the chain corresponds to 49–62 (KFTNRFLLHGQTIE). The helical transmembrane segment at 63 to 82 (IIWTVLPAIILMFIAFPSLR) threads the bilayer. Residues 83-228 (LLYLMDEINT…FIKWITSMTN (146 aa)) lie on the Mitochondrial intermembrane side of the membrane. Cu cation-binding residues include H161, C196, E198, C200, H204, and M207. Position 198 (E198) interacts with Mg(2+).

Belongs to the cytochrome c oxidase subunit 2 family. As to quaternary structure, component of the cytochrome c oxidase (complex IV, CIV), a multisubunit enzyme composed of a catalytic core of 3 subunits and several supernumerary subunits. The complex exists as a monomer or a dimer and forms supercomplexes (SCs) in the inner mitochondrial membrane with ubiquinol-cytochrome c oxidoreductase (cytochrome b-c1 complex, complex III, CIII). Requires Cu cation as cofactor.

It localises to the mitochondrion inner membrane. The catalysed reaction is 4 Fe(II)-[cytochrome c] + O2 + 8 H(+)(in) = 4 Fe(III)-[cytochrome c] + 2 H2O + 4 H(+)(out). Its function is as follows. Component of the cytochrome c oxidase, the last enzyme in the mitochondrial electron transport chain which drives oxidative phosphorylation. The respiratory chain contains 3 multisubunit complexes succinate dehydrogenase (complex II, CII), ubiquinol-cytochrome c oxidoreductase (cytochrome b-c1 complex, complex III, CIII) and cytochrome c oxidase (complex IV, CIV), that cooperate to transfer electrons derived from NADH and succinate to molecular oxygen, creating an electrochemical gradient over the inner membrane that drives transmembrane transport and the ATP synthase. Cytochrome c oxidase is the component of the respiratory chain that catalyzes the reduction of oxygen to water. Electrons originating from reduced cytochrome c in the intermembrane space (IMS) are transferred via the dinuclear copper A center (CU(A)) of subunit 2 and heme A of subunit 1 to the active site in subunit 1, a binuclear center (BNC) formed by heme A3 and copper B (CU(B)). The BNC reduces molecular oxygen to 2 water molecules using 4 electrons from cytochrome c in the IMS and 4 protons from the mitochondrial matrix. In Anopheles gambiae (African malaria mosquito), this protein is Cytochrome c oxidase subunit 2 (COII).